The following is a 407-amino-acid chain: D-3-phosphoglycerate dehydrogenase (407 aa).

NAD(+) is bound by residues 161–162, aspartate 181, 238–240, and aspartate 264; these read HI and ASR. Residue arginine 240 is part of the active site. Glutamate 269 is an active-site residue. The active-site Proton donor is the histidine 292. Position 292 to 295 (292 to 295) interacts with NAD(+); it reads HIGG. One can recognise an ACT domain in the interval 340 to 407; it reads RILNIHNNKP…PNSIKTRVLY (68 aa).

It belongs to the D-isomer specific 2-hydroxyacid dehydrogenase family.

It carries out the reaction (2R)-3-phosphoglycerate + NAD(+) = 3-phosphooxypyruvate + NADH + H(+). The enzyme catalyses (R)-2-hydroxyglutarate + NAD(+) = 2-oxoglutarate + NADH + H(+). It functions in the pathway amino-acid biosynthesis; L-serine biosynthesis; L-serine from 3-phospho-D-glycerate: step 1/3. In terms of biological role, catalyzes the reversible oxidation of 3-phospho-D-glycerate to 3-phosphonooxypyruvate, the first step of the phosphorylated L-serine biosynthesis pathway. Also catalyzes the reversible oxidation of 2-hydroxyglutarate to 2-oxoglutarate. The sequence is that of D-3-phosphoglycerate dehydrogenase (serA) from Dictyostelium discoideum (Social amoeba).